We begin with the raw amino-acid sequence, 333 residues long: Glutamyl-tRNA reductase (333 aa).

Residues 60 to 63, serine 110, 115 to 117, and glutamine 121 contribute to the substrate site; these read TCHR and ETE. Catalysis depends on cysteine 61, which acts as the Nucleophile. 189 to 194 is an NADP(+) binding site; the sequence is GYSEIN.

This sequence belongs to the glutamyl-tRNA reductase family. In terms of assembly, homodimer.

It catalyses the reaction (S)-4-amino-5-oxopentanoate + tRNA(Glu) + NADP(+) = L-glutamyl-tRNA(Glu) + NADPH + H(+). The protein operates within porphyrin-containing compound metabolism; protoporphyrin-IX biosynthesis; 5-aminolevulinate from L-glutamyl-tRNA(Glu): step 1/2. Catalyzes the NADPH-dependent reduction of glutamyl-tRNA(Glu) to glutamate 1-semialdehyde (GSA). This is Glutamyl-tRNA reductase from Chlamydia muridarum (strain MoPn / Nigg).